We begin with the raw amino-acid sequence, 89 residues long: MANIKSAIKRAKTSEKRRAHNASMKSAMRTAIKKFEALVELKDVEKAQEAFIIASKKLDKAASKGLIHKNAASRQKSRLAKKLNSIQAS.

Disordered stretches follow at residues methionine 1 to lysine 25 and lysine 69 to serine 89. A compositionally biased stretch (basic residues) spans alanine 7 to histidine 20.

The protein belongs to the bacterial ribosomal protein bS20 family.

Binds directly to 16S ribosomal RNA. The chain is Small ribosomal subunit protein bS20 from Geobacillus thermodenitrificans (strain NG80-2).